A 613-amino-acid polypeptide reads, in one-letter code: Zinc metalloproteinase-disintegrin-like EoVMP2 (613 aa).

Residues 1 to 20 (MMQVLLVTICLAVFPYQGSS) form the signal peptide. A propeptide spanning residues 21 to 194 (IILESGNVND…EASQLFATSE (174 aa)) is cleaved from the precursor. Q195 carries the pyrrolidone carboxylic acid modification. Positions 201–397 (RYIEFFIVVD…RNPKCMINKP (197 aa)) constitute a Peptidase M12B domain. Position 204 (E204) interacts with Ca(2+). An N-linked (GlcNAc...) asparagine glycan is attached at N219. D288 contributes to the Ca(2+) binding site. Cystine bridges form between C312/C392, C352/C376, and C354/C359. H337 is a Zn(2+) binding site. E338 is an active-site residue. H341 and H347 together coordinate Zn(2+). Residue N375 is glycosylated (N-linked (GlcNAc...) asparagine). 8 residues coordinate Ca(2+): C392, N395, V407, N410, L412, E414, E417, and D420. The 87-residue stretch at 405–491 (PPVCGNGLLE…DCPIDGFHAN (87 aa)) folds into the Disintegrin domain. Cystine bridges form between C408–C437, C419–C432, C421–C427, C431–C454, C445–C451, C450–C476, C463–C483, C470–C502, C495–C507, C514–C564, C529–C575, C542–C552, C559–C601, and C595–C606. Residues 469 to 471 (DCD) carry the D/ECD-tripeptide motif.

The protein belongs to the venom metalloproteinase (M12B) family. P-III subfamily. P-IIIa sub-subfamily. In terms of assembly, monomer. Zn(2+) serves as cofactor. In terms of tissue distribution, expressed by the venom gland.

Its subcellular location is the secreted. Snake venom zinc metalloprotease that possesses high hemorrhagic activity. It inhibits collagen-induced platelet aggregation and activates prothrombin (F2). The protein is Zinc metalloproteinase-disintegrin-like EoVMP2 (Svmp3-Eoc22) of Echis ocellatus (Ocellated saw-scaled viper).